The primary structure comprises 728 residues: Polyribonucleotide nucleotidyltransferase (728 aa).

2 residues coordinate Mg(2+): D487 and D493. Residues 554–613 form the KH domain; sequence PRIEVITVPTDKIREVIGTGGKVIREIVEKTGAKVDISDDGTIKVASSDGESIRKAIAWI. In terms of domain architecture, S1 motif spans 623-691; that stretch reads GKIYEGTVVK…DRGKVRLSMK (69 aa). The segment covering 697-707 has biased composition (acidic residues); sequence TGEEIVYENEP. The interval 697–728 is disordered; it reads TGEEIVYENEPAEQPREKREGGGGRGRRRERD. The segment covering 709-718 has biased composition (basic and acidic residues); it reads EQPREKREGG.

It belongs to the polyribonucleotide nucleotidyltransferase family. Mg(2+) is required as a cofactor.

It localises to the cytoplasm. It catalyses the reaction RNA(n+1) + phosphate = RNA(n) + a ribonucleoside 5'-diphosphate. Functionally, involved in mRNA degradation. Catalyzes the phosphorolysis of single-stranded polyribonucleotides processively in the 3'- to 5'-direction. In Parvibaculum lavamentivorans (strain DS-1 / DSM 13023 / NCIMB 13966), this protein is Polyribonucleotide nucleotidyltransferase.